Here is a 714-residue protein sequence, read N- to C-terminus: Penicillin-binding protein 1F (714 aa).

The Cytoplasmic segment spans residues 1-12 (MFKIKKKKLFIP). The helical; Signal-anchor for type II membrane protein transmembrane segment at 13–33 (IIILVLTAFLALIGYISIIFL) threads the bilayer. The Extracellular portion of the chain corresponds to 34 to 714 (GHYVIDEKKL…DYVQPKLFSS (681 aa)). Residues 49 to 217 (SKIVDQNGDE…STYSPILHPD (169 aa)) are transglycosylase. Glu87 functions as the Proton donor; for transglycosylase activity in the catalytic mechanism. The interval 297–592 (SKLQKTAYQV…SSYPTRLFKD (296 aa)) is transpeptidase. Catalysis depends on Ser359, which acts as the Acyl-ester intermediate; for transpeptidase activity.

The protein in the N-terminal section; belongs to the glycosyltransferase 51 family. In the C-terminal section; belongs to the transpeptidase family.

The protein resides in the cell membrane. The catalysed reaction is [GlcNAc-(1-&gt;4)-Mur2Ac(oyl-L-Ala-gamma-D-Glu-L-Lys-D-Ala-D-Ala)](n)-di-trans,octa-cis-undecaprenyl diphosphate + beta-D-GlcNAc-(1-&gt;4)-Mur2Ac(oyl-L-Ala-gamma-D-Glu-L-Lys-D-Ala-D-Ala)-di-trans,octa-cis-undecaprenyl diphosphate = [GlcNAc-(1-&gt;4)-Mur2Ac(oyl-L-Ala-gamma-D-Glu-L-Lys-D-Ala-D-Ala)](n+1)-di-trans,octa-cis-undecaprenyl diphosphate + di-trans,octa-cis-undecaprenyl diphosphate + H(+). The enzyme catalyses Preferential cleavage: (Ac)2-L-Lys-D-Ala-|-D-Ala. Also transpeptidation of peptidyl-alanyl moieties that are N-acyl substituents of D-alanine.. Its pathway is cell wall biogenesis; peptidoglycan biosynthesis. Functionally, cell wall formation. May be involved in outgrowth of the germinated spore or it could function in the synthesis of the germ cell wall. The protein is Penicillin-binding protein 1F (pbpF) of Bacillus subtilis (strain 168).